The primary structure comprises 610 residues: MSEIFDAKAFLKTVTSQPGVYRMYDAGGTVIYVGKAKDLKKRLSSYFRSNLASRKTEALVAQIQHIDVTVTHTETEALLLEHNYIKLYQPRYNVLLRDDKSYPFIFLSGDTHPRLAMHRGAKHAKGEYFGPFPNGYAVRETLALLQKIFPIRQCENSVYRNRSRPCLQYQIGRCLGPCVAGLVSEEEYAQQVEYVRLFLSGKDDQVLTQLIARMEKASQDLAFEEAARIRDQIQAVRRVTEKQFVSNAGDDLDVIGVAFDAGMACVHVLFIRQGKVLGSRSYFPKVPGGTELGEVVETFVGQFYLQGSQMRTLPGEILLDFNLSDKTLLADSLSELAGRRIHVQTKPRGDRARYLKLARTNAATALITKLSQQSTITQRLTALAAVLKLPAIKRMECFDISHTMGEQTVASCVVFDANGPLRAEYRRYNIAGITPGDDYAAMNQVLRRRYGKAIEESKIPDVILIDGGKGQLAQAKAVFAELDVPWDKHRPLLLGVAKGADRKAGLEILFFEPEGEGFSLPPDSPALHVIQHIRDESHDHAIGGHRKKRAKVKNTSTLETIEGVGPKRRQMLLKYMGGLQGLRNASVEEIAKVPGISQGLAEKIFWSLKH.

Residues S16–V94 enclose the GIY-YIG domain. A UVR domain is found at D204–V239.

It belongs to the UvrC family. Interacts with UvrB in an incision complex.

Its subcellular location is the cytoplasm. In terms of biological role, the UvrABC repair system catalyzes the recognition and processing of DNA lesions. UvrC both incises the 5' and 3' sides of the lesion. The N-terminal half is responsible for the 3' incision and the C-terminal half is responsible for the 5' incision. This is UvrABC system protein C from Salmonella enteritidis PT4 (strain P125109).